A 274-amino-acid polypeptide reads, in one-letter code: Membrane protein insertase YidC 2 (274 aa).

Residues M1–A20 form the signal peptide. Residue C21 is the site of N-palmitoyl cysteine attachment. A lipid anchor (S-diacylglycerol cysteine) is attached at C21. A run of 4 helical transmembrane segments spans residues I56 to V76, S128 to L148, V167 to L187, and G205 to W225.

The protein belongs to the OXA1/ALB3/YidC family. Type 2 subfamily.

It localises to the cell membrane. Its function is as follows. Required for the insertion and/or proper folding and/or complex formation of integral membrane proteins into the membrane. Involved in integration of membrane proteins that insert both dependently and independently of the Sec translocase complex, as well as at least some lipoproteins. The protein is Membrane protein insertase YidC 2 of Streptococcus pneumoniae serotype 4 (strain ATCC BAA-334 / TIGR4).